The sequence spans 195 residues: Small ribosomal subunit protein uS4c (195 aa).

Residues 82–143 (MRLDNILFRL…KQRSKALIQN (62 aa)) form the S4 RNA-binding domain.

The protein belongs to the universal ribosomal protein uS4 family. Part of the 30S ribosomal subunit. Contacts protein S5. The interaction surface between S4 and S5 is involved in control of translational fidelity.

The protein resides in the plastid. The protein localises to the chloroplast. Functionally, one of the primary rRNA binding proteins, it binds directly to 16S rRNA where it nucleates assembly of the body of the 30S subunit. Its function is as follows. With S5 and S12 plays an important role in translational accuracy. This is Small ribosomal subunit protein uS4c (rps4) from Gladiolus murielae (Abyssinian gladiolus).